We begin with the raw amino-acid sequence, 98 residues long: Integration host factor subunit alpha (98 aa).

Belongs to the bacterial histone-like protein family. In terms of assembly, heterodimer of an alpha and a beta chain.

Functionally, this protein is one of the two subunits of integration host factor, a specific DNA-binding protein that functions in genetic recombination as well as in transcriptional and translational control. This chain is Integration host factor subunit alpha, found in Marinomonas sp. (strain MWYL1).